We begin with the raw amino-acid sequence, 347 residues long: MFPIFDPVALGLYIVGYIFMLIIAATIAPKVAKSISGRFTLYGAMALTAVLVVLTTAFIIYLFVTVALPHMGAYGLSFLLGLIFFVVLMNIITYFASPYLINLSYGARPDPRLQQIVDEVAARLGAPFKLKAVVVDGPPNAFAYGNFLTGRYVAVTSSMLALTDRRELEAVIGHEIGHHLHRDNAIMLLFGILPSIVYYLGVTAVHMAMASSGNRGGNPAILAAVGIAAVIVSFLIQLLVLAFSRLREYYADTAGAKAAGKEAMQFALAKIHKFYFANPEAHEVVRDSKFRALFIYALVNAVANPFVSVTRSDLEEIKRSSYSVFQEIFSTHPPIPKRLKFLDELQF.

The next 4 membrane-spanning stretches (helical) occupy residues 8–28 (VALG…ATIA), 44–64 (AMAL…YLFV), 76–96 (LSFL…TYFA), and 141–163 (AFAY…LALT). His174 lines the Zn(2+) pocket. Residue Glu175 is part of the active site. His178 lines the Zn(2+) pocket. The next 2 membrane-spanning stretches (helical) occupy residues 185–205 (AIML…VTAV) and 221–241 (ILAA…LLVL). A Zn(2+)-binding site is contributed by Glu248.

This sequence belongs to the peptidase M48B family. The cofactor is Zn(2+).

It is found in the cell membrane. This Pyrobaculum aerophilum (strain ATCC 51768 / DSM 7523 / JCM 9630 / CIP 104966 / NBRC 100827 / IM2) protein is Protease HtpX homolog.